A 560-amino-acid polypeptide reads, in one-letter code: NAD-dependent malic enzyme (560 aa).

The active-site Proton donor is Tyr100. NAD(+) is bound at residue Arg153. Lys171 functions as the Proton acceptor in the catalytic mechanism. Residues Glu242, Asp243, and Asp266 each coordinate a divalent metal cation. Residues Asp266 and Asn413 each coordinate NAD(+).

This sequence belongs to the malic enzymes family. As to quaternary structure, homotetramer. It depends on Mg(2+) as a cofactor. The cofactor is Mn(2+).

It carries out the reaction (S)-malate + NAD(+) = pyruvate + CO2 + NADH. The enzyme catalyses oxaloacetate + H(+) = pyruvate + CO2. The polypeptide is NAD-dependent malic enzyme (Psychromonas ingrahamii (strain DSM 17664 / CCUG 51855 / 37)).